A 351-amino-acid chain; its full sequence is Serine/threonine-protein kinase mos (351 aa).

One can recognise a Protein kinase domain in the interval 71–340 (FSIDGVIGSG…ERRTDDTENL (270 aa)). ATP is bound by residues 77–85 (IGSGGFGSV) and K98. Residue D194 is the Proton acceptor of the active site.

Belongs to the protein kinase superfamily. Ser/Thr protein kinase family.

The enzyme catalyses L-seryl-[protein] + ATP = O-phospho-L-seryl-[protein] + ADP + H(+). It catalyses the reaction L-threonyl-[protein] + ATP = O-phospho-L-threonyl-[protein] + ADP + H(+). Its function is as follows. Suppresses the mitotic cell cycle in oocytes, forcing them to undergo meiosis II to produce haploid gametes. Acts as a MAPK kinase kinase (MAP3K) that acts upstream of MAP kinase in oocytes. This is Serine/threonine-protein kinase mos from Patiria pectinifera (Starfish).